The primary structure comprises 349 residues: Core protein VP7 (349 aa).

Asn287 carries N-linked (GlcNAc...) asparagine; by host glycosylation.

Belongs to the orbivirus VP7 family. As to quaternary structure, homotrimer that assemble in a complex of 260 capsomers on an inner scaffold composed of VP3.

The protein resides in the virion. Functionally, the VP7 protein is one of the five proteins (with VP1, VP3, VP4, and VP6) which form the inner capsid of the virus. The protein is Core protein VP7 (Segment-7) of Bluetongue virus 1 (isolate Australia) (BTV 1).